The primary structure comprises 252 residues: 2-succinyl-6-hydroxy-2,4-cyclohexadiene-1-carboxylate synthase (252 aa).

It belongs to the AB hydrolase superfamily. MenH family. Monomer.

It catalyses the reaction 5-enolpyruvoyl-6-hydroxy-2-succinyl-cyclohex-3-ene-1-carboxylate = (1R,6R)-6-hydroxy-2-succinyl-cyclohexa-2,4-diene-1-carboxylate + pyruvate. The protein operates within quinol/quinone metabolism; 1,4-dihydroxy-2-naphthoate biosynthesis; 1,4-dihydroxy-2-naphthoate from chorismate: step 3/7. Its pathway is quinol/quinone metabolism; menaquinone biosynthesis. Catalyzes a proton abstraction reaction that results in 2,5-elimination of pyruvate from 2-succinyl-5-enolpyruvyl-6-hydroxy-3-cyclohexene-1-carboxylate (SEPHCHC) and the formation of 2-succinyl-6-hydroxy-2,4-cyclohexadiene-1-carboxylate (SHCHC). The sequence is that of 2-succinyl-6-hydroxy-2,4-cyclohexadiene-1-carboxylate synthase from Escherichia coli O81 (strain ED1a).